Reading from the N-terminus, the 56-residue chain is Large ribosomal subunit protein bL32c (56 aa).

Over residues 1–20 (MAAPKKRTSKSRKNMRKSTW) the composition is skewed to basic residues. Residues 1–28 (MAAPKKRTSKSRKNMRKSTWKRQAATQA) are disordered.

This sequence belongs to the bacterial ribosomal protein bL32 family.

It is found in the plastid. The protein localises to the chloroplast. The sequence is that of Large ribosomal subunit protein bL32c (rpl32) from Mesostigma viride (Green alga).